The chain runs to 241 residues: DNA-binding dual master transcriptional regulator RpaA (241 aa).

A Response regulatory domain is found at 3–119 (RILIIDDDPA…EMLARVRALL (117 aa)). Asp52 is subject to 4-aspartylphosphate. A DNA-binding region (ompR/PhoB-type) is located at residues 132–231 (SEILNQGPLT…VYGAGYCLEL (100 aa)).

Interacts with reduced ferredoxin (petF). Interacts with CikA, RpaB, SasA, Sll0038 (pixG) and a number of other proteins. In terms of processing, phosphorylated by SasA; phosphorylation is maximal when KaiC phosphorylation is active during the circadian cycle. Dephosphorylated by CikA. CikA and SasA cooperation generates RpaA activity oscillation that is distinct from that generated by CikA or SasA alone and offset from the rhythm of KaiC phosphorylation.

The protein localises to the cytoplasm. Functionally, response regulator of 2 two-component regulatory systems SasA/RpaA and CikA/RpaA involved in genome-wide circadian gene expression. The histidine kinases have opposing effects modulated by the clock oscillator proteins; SasA phosphorylates RpaA (stimulated by fully phosphorylated KaiC1) while CikA dephosphorylates phospho-RpaA (stimulated by the phospho-Ser-432-KaiC1-KaiB complex). The RpaA regulon is about 300 genes, and includes itself, cikA, sigE, sigG, genes involved in photosynthesis, carbon metabolism in the light and dark, phototaxis, CRISPR arrays 2 and 3 as well as nearly 90 ncRNAs. Genes are up- or down-regulated in its absence. Involved in regulation of primary sugar and amino acid metabolism and in adaptation to light changes. Regulates the accumulation of the monomeric photosystem I and the D1 protein under high light conditions. Overexpression causes cells to grow more slowly, increases levels of transcripts for clock oscillator genes in the light and the dark, increases levels of SigE protein, increases accumulation of sugar catabolic enzymes in the dark with concomitant decreases in most sugar metabolites. Plays a role in cell division; overexpression from the psbAII promoter increases expression of some cell-division-related genes, alters cell volume and changes the outer cell membrane and cell wall appearance. This Synechocystis sp. (strain ATCC 27184 / PCC 6803 / Kazusa) protein is DNA-binding dual master transcriptional regulator RpaA.